The sequence spans 185 residues: Ribosome-recycling factor (185 aa).

The protein belongs to the RRF family.

It localises to the cytoplasm. Responsible for the release of ribosomes from messenger RNA at the termination of protein biosynthesis. May increase the efficiency of translation by recycling ribosomes from one round of translation to another. The chain is Ribosome-recycling factor from Oceanobacillus iheyensis (strain DSM 14371 / CIP 107618 / JCM 11309 / KCTC 3954 / HTE831).